Reading from the N-terminus, the 156-residue chain is Nucleosome assembly protein 1-like 5 (156 aa).

The segment covering 1–16 has biased composition (basic and acidic residues); it reads MADPEKQGPAESRAED. The disordered stretch occupies residues 1–58; sequence MADPEKQGPAESRAEDEVMEGAQGGEDAATGDSAAAPAAEEPQAPAENAPKPKKDFME. Residues 34 to 49 are compositionally biased toward low complexity; sequence AAAPAAEEPQAPAENA. A coiled-coil region spans residues 68–94; that stretch reads VLALKKLQKRCDKIEAKFDKEFQALEK. The tract at residues 120-156 is disordered; the sequence is TLEGEDDEDDEEEDDEEEEEEEEAAAGATGGPNFAKK. The segment covering 122 to 143 has biased composition (acidic residues); sequence EGEDDEDDEEEDDEEEEEEEEA.

Belongs to the nucleosome assembly protein (NAP) family.

The protein resides in the nucleus. The polypeptide is Nucleosome assembly protein 1-like 5 (Nap1l5) (Mus musculus (Mouse)).